A 236-amino-acid chain; its full sequence is 2-C-methyl-D-erythritol 4-phosphate cytidylyltransferase (236 aa).

Belongs to the IspD/TarI cytidylyltransferase family. IspD subfamily. As to quaternary structure, homodimer.

It carries out the reaction 2-C-methyl-D-erythritol 4-phosphate + CTP + H(+) = 4-CDP-2-C-methyl-D-erythritol + diphosphate. It functions in the pathway isoprenoid biosynthesis; isopentenyl diphosphate biosynthesis via DXP pathway; isopentenyl diphosphate from 1-deoxy-D-xylulose 5-phosphate: step 2/6. Functionally, catalyzes the formation of 4-diphosphocytidyl-2-C-methyl-D-erythritol from CTP and 2-C-methyl-D-erythritol 4-phosphate (MEP). The sequence is that of 2-C-methyl-D-erythritol 4-phosphate cytidylyltransferase from Buchnera aphidicola subsp. Schizaphis graminum (strain Sg).